We begin with the raw amino-acid sequence, 590 residues long: Leucine-rich repeat transmembrane neuronal protein 4 (590 aa).

The N-terminal stretch at 1–30 (MGFHLITQLKGMSVVLVLLPTLLLVMLTGA) is a signal peptide. Positions 31–61 (QRACPKNCRCDGKIVYCESHAFADIPENISG) constitute an LRRNT domain. Over 31 to 424 (QRACPKNCRC…QEYEHVSFHK (394 aa)) the chain is Extracellular. Asn58 carries an N-linked (GlcNAc...) asparagine glycan. LRR repeat units follow at residues 62–83 (GSQGLSLRFNSIQKLKSNQFAG), 86–107 (QLIWLYLDHNYISSVDEDAFQG), 110–131 (RLKELILSSNKITYLHNKTFHP), 134–155 (NLRNLDLSYNKLQTLQSEQFKG), 158–179 (KLIILHLRSNSLKTVPIRVFQD), 182–203 (NLDFLDLGYNRLRSLSRNAFAG), 206–226 (KLKELHLEHNQFSKINFAHFP), 230–251 (NLRSIYLQWNRIRSISQGLTWT), 254–275 (SLHNLDLSGNDIQGIEPGTFKC), and 278–299 (NLQKLNLDSNKLTNISQETVNA). Residue Asn126 is glycosylated (N-linked (GlcNAc...) asparagine). The N-linked (GlcNAc...) asparagine glycan is linked to Asn291. In terms of domain architecture, LRRCT spans 311–362 (NMWECSRSICPLFYWLKNFKGNKESTMICAGPKHIQGEKVSDAVETYNICSE). The helical transmembrane segment at 425 to 445 (IIAGSVALFLSVAMILLVIYV) threads the bilayer. Residues 446–590 (SWKRYPASMK…PAIYLERIAN (145 aa)) are Cytoplasmic-facing.

The protein belongs to the LRRTM family. In terms of assembly, peripherally associated with AMPAR complex. AMPAR complex consists of an inner core made of 4 pore-forming GluA/GRIA proteins (GRIA1, GRIA2, GRIA3 and GRIA4) and 4 major auxiliary subunits arranged in a twofold symmetry. One of the two pairs of distinct binding sites is occupied either by CNIH2, CNIH3 or CACNG2, CACNG3. The other harbors CACNG2, CACNG3, CACNG4, CACNG8 or GSG1L. This inner core of AMPAR complex is complemented by outer core constituents binding directly to the GluA/GRIA proteins at sites distinct from the interaction sites of the inner core constituents. Outer core constituents include at least PRRT1, PRRT2, CKAMP44/SHISA9, FRRS1L and NRN1. The proteins of the inner and outer core serve as a platform for other, more peripherally associated AMPAR constituents, including LRRTM4. Alone or in combination, these auxiliary subunits control the gating and pharmacology of the AMPAR complex and profoundly impact their biogenesis and protein processing. As to expression, expressed in neuronal tissues.

Its subcellular location is the cell membrane. The protein resides in the postsynaptic cell membrane. In terms of biological role, may play a role in the development and maintenance of the vertebrate nervous system. Exhibits strong synaptogenic activity, restricted to excitatory presynaptic differentiation. In Homo sapiens (Human), this protein is Leucine-rich repeat transmembrane neuronal protein 4 (LRRTM4).